A 467-amino-acid polypeptide reads, in one-letter code: Uronate isomerase (467 aa).

It belongs to the metallo-dependent hydrolases superfamily. Uronate isomerase family.

It carries out the reaction D-glucuronate = D-fructuronate. It catalyses the reaction aldehydo-D-galacturonate = keto-D-tagaturonate. The protein operates within carbohydrate metabolism; pentose and glucuronate interconversion. In Solibacter usitatus (strain Ellin6076), this protein is Uronate isomerase.